Reading from the N-terminus, the 253-residue chain is MTSIFFNRHYPTIESACERWGLVYDPDAEFELVFEDNILTLIKRDEPKLKGISVDFVSGAVAHRRKFGGGRGQSIAKAVGLKQGVMPTVVDGTAGLGRDAFVLASLGCKVLMVERHPIVAALLEDGLRRAYEDAEIGGWMQQRMSLFHGSSIDSLADAAKASNTEVDVVYLDPMYPHREKSALVKKEMRVFQSLVGADLDADGLLAPAMALATKRVVVKRPDYADDLDGVKPSMVIATKKNRFDVYVKAAMTA.

Residues 98–99, 114–115, 150–151, and Asp-172 each bind S-adenosyl-L-methionine; these read RD, ER, and SS.

Belongs to the methyltransferase superfamily. RsmJ family.

It is found in the cytoplasm. It carries out the reaction guanosine(1516) in 16S rRNA + S-adenosyl-L-methionine = N(2)-methylguanosine(1516) in 16S rRNA + S-adenosyl-L-homocysteine + H(+). Specifically methylates the guanosine in position 1516 of 16S rRNA. This chain is Ribosomal RNA small subunit methyltransferase J, found in Shewanella pealeana (strain ATCC 700345 / ANG-SQ1).